The sequence spans 282 residues: 4-hydroxy-3-methylbut-2-enyl diphosphate reductase (282 aa).

Cys14 contributes to the [4Fe-4S] cluster binding site. Residues His43 and His78 each contribute to the (2E)-4-hydroxy-3-methylbut-2-enyl diphosphate site. Dimethylallyl diphosphate-binding residues include His43 and His78. Residues His43 and His78 each contribute to the isopentenyl diphosphate site. Cys100 is a binding site for [4Fe-4S] cluster. His128 is a binding site for (2E)-4-hydroxy-3-methylbut-2-enyl diphosphate. A dimethylallyl diphosphate-binding site is contributed by His128. Isopentenyl diphosphate is bound at residue His128. Catalysis depends on Glu130, which acts as the Proton donor. Thr164 contributes to the (2E)-4-hydroxy-3-methylbut-2-enyl diphosphate binding site. Residue Cys192 coordinates [4Fe-4S] cluster. Positions 220, 221, 222, and 266 each coordinate (2E)-4-hydroxy-3-methylbut-2-enyl diphosphate. Positions 220, 221, 222, and 266 each coordinate dimethylallyl diphosphate. Positions 220, 221, 222, and 266 each coordinate isopentenyl diphosphate.

The protein belongs to the IspH family. [4Fe-4S] cluster is required as a cofactor.

It catalyses the reaction isopentenyl diphosphate + 2 oxidized [2Fe-2S]-[ferredoxin] + H2O = (2E)-4-hydroxy-3-methylbut-2-enyl diphosphate + 2 reduced [2Fe-2S]-[ferredoxin] + 2 H(+). It carries out the reaction dimethylallyl diphosphate + 2 oxidized [2Fe-2S]-[ferredoxin] + H2O = (2E)-4-hydroxy-3-methylbut-2-enyl diphosphate + 2 reduced [2Fe-2S]-[ferredoxin] + 2 H(+). It participates in isoprenoid biosynthesis; dimethylallyl diphosphate biosynthesis; dimethylallyl diphosphate from (2E)-4-hydroxy-3-methylbutenyl diphosphate: step 1/1. It functions in the pathway isoprenoid biosynthesis; isopentenyl diphosphate biosynthesis via DXP pathway; isopentenyl diphosphate from 1-deoxy-D-xylulose 5-phosphate: step 6/6. Its function is as follows. Catalyzes the conversion of 1-hydroxy-2-methyl-2-(E)-butenyl 4-diphosphate (HMBPP) into a mixture of isopentenyl diphosphate (IPP) and dimethylallyl diphosphate (DMAPP). Acts in the terminal step of the DOXP/MEP pathway for isoprenoid precursor biosynthesis. This is 4-hydroxy-3-methylbut-2-enyl diphosphate reductase from Clostridium perfringens (strain ATCC 13124 / DSM 756 / JCM 1290 / NCIMB 6125 / NCTC 8237 / Type A).